Here is a 211-residue protein sequence, read N- to C-terminus: Protein-L-isoaspartate O-methyltransferase (211 aa).

Ser-62 is an active-site residue.

This sequence belongs to the methyltransferase superfamily. L-isoaspartyl/D-aspartyl protein methyltransferase family.

Its subcellular location is the cytoplasm. It catalyses the reaction [protein]-L-isoaspartate + S-adenosyl-L-methionine = [protein]-L-isoaspartate alpha-methyl ester + S-adenosyl-L-homocysteine. Catalyzes the methyl esterification of L-isoaspartyl residues in peptides and proteins that result from spontaneous decomposition of normal L-aspartyl and L-asparaginyl residues. It plays a role in the repair and/or degradation of damaged proteins. The protein is Protein-L-isoaspartate O-methyltransferase of Shewanella halifaxensis (strain HAW-EB4).